Consider the following 198-residue polypeptide: Small ribosomal subunit protein uS7 (198 aa).

It belongs to the universal ribosomal protein uS7 family. In terms of assembly, part of the 30S ribosomal subunit.

One of the primary rRNA binding proteins, it binds directly to 16S rRNA where it nucleates assembly of the head domain of the 30S subunit. Is located at the subunit interface close to the decoding center. The sequence is that of Small ribosomal subunit protein uS7 from Desulfurococcus mucosus (Desulfurococcus mobilis).